The primary structure comprises 341 residues: HTH-type transcriptional repressor PurR (341 aa).

Residues 2–56 (ATIKDVAKRANVSTTTVSHVINKTRFVAEETRNAVWAAIKELHYSPSAVARSLKV) enclose the HTH lacI-type domain. The segment at residues 4 to 23 (IKDVAKRANVSTTTVSHVIN) is a DNA-binding region (H-T-H motif). A DNA-binding region spans residues 48–56 (SAVARSLKV). Positions 73, 190, 192, 221, and 275 each coordinate hypoxanthine.

In terms of assembly, homodimer.

It participates in purine metabolism; purine nucleotide biosynthesis [regulation]. Functionally, is the main repressor of the genes involved in the de novo synthesis of purine nucleotides, regulating purB, purC, purEK, purF, purHD, purL, purMN and guaBA expression. PurR is allosterically activated to bind its cognate DNA by binding the purine corepressors, hypoxanthine or guanine, thereby effecting transcription repression. The protein is HTH-type transcriptional repressor PurR of Shigella sonnei (strain Ss046).